We begin with the raw amino-acid sequence, 177 residues long: Dual-action ribosomal maturation protein DarP (177 aa).

The segment at 1 to 26 (MKIVGDSEHFKQPYDSDEEYVSKTED) is disordered.

The protein belongs to the DarP family.

It localises to the cytoplasm. Its function is as follows. Member of a network of 50S ribosomal subunit biogenesis factors which assembles along the 30S-50S interface, preventing incorrect 23S rRNA structures from forming. Promotes peptidyl transferase center (PTC) maturation. The chain is Dual-action ribosomal maturation protein DarP from Shewanella sp. (strain MR-4).